The following is a 571-amino-acid chain: MDNKISPEAQVAELELDAVIGFNGHVPTGLKCHPDQEHLIFPLGCTILIQAINTQEQNFLQGHGNNVSCLAISRSGRYIASGQVTFMGFKADIILWDYKKRELLARLSLHKGKIEALAFSPNDLYLVSLGGPDDGSVVVWSIAKRDAICGSPAAGLNVGNATNVIFSRCRDEMFVTAGNGTIRVWELDLPNRKIWPTECQTGQMKRIVMSIGMADDDSFFYLGTTTGDILKMNPRTKLLTDAGPAKDKFSLGVSAIRCLKMGGLLVGSGAGLLVFCKSPSYKPIKKIQSQGGITSITLRGEGHQFFVGTEESHIYRVSFTDFKETLIATCHFEAVEDIVFPFGTAELFATCAKKDIRVWHTSSNSAHRIGVTAIATTSDCKRVISGGGEGEVRVWQIGCQTQKLEEALKEHKSSVSCIRVKKNNEECVTASTDGTCIIWDLVRLRRNQMILANTLFQCVCYHPEEFQIITSGTDRKIAYWEVFDGTVIRELEGSLSGSINGMDITQEGVHFVTGGNDHLVKVWDYNEGEVTHVGVGHSGNITRIRISPGNQYIVSVSADGAILRWKYPYTS.

WD repeat units lie at residues 62–106 (GHGN…LLAR), 109–150 (LHKG…AICG), 156–195 (LNVG…RKIW), 288–327 (QSQG…ETLI), 330–364 (CHFE…TSSN), 366–405 (AHRI…QKLE), 410–449 (EHKS…RNQM), 451–490 (LANT…VIRE), 494–533 (SLSG…VTHV), and 536–571 (GHSG…PYTS).

It belongs to the CFAP52 family. Microtubule inner protein component of sperm flagellar doublet microtubules. Interacts with BRCA2. Interacts with the CCT chaperonin complex. Interacts with HSP70. Interacts with AK8. Interacts with CFAP45. Interacts with DNAI1. Interacts with IQDC.

It localises to the cytoplasm. Its subcellular location is the cytoskeleton. The protein resides in the cilium axoneme. It is found in the flagellum axoneme. In terms of biological role, microtubule inner protein (MIP) part of the dynein-decorated doublet microtubules (DMTs) in cilia axoneme. Important for proper ciliary and flagellar beating. May act in cooperation with CFAP45 and axonemal dynein subunit DNAH11. May play a role in cell growth and/or survival. This chain is Cilia- and flagella-associated protein 52, found in Macaca fascicularis (Crab-eating macaque).